A 172-amino-acid chain; its full sequence is Large ribosomal subunit protein uL10 (172 aa).

It belongs to the universal ribosomal protein uL10 family. In terms of assembly, part of the ribosomal stalk of the 50S ribosomal subunit. The N-terminus interacts with L11 and the large rRNA to form the base of the stalk. The C-terminus forms an elongated spine to which L12 dimers bind in a sequential fashion forming a multimeric L10(L12)X complex.

In terms of biological role, forms part of the ribosomal stalk, playing a central role in the interaction of the ribosome with GTP-bound translation factors. The chain is Large ribosomal subunit protein uL10 from Rhizobium leguminosarum bv. trifolii (strain WSM2304).